Reading from the N-terminus, the 365-residue chain is Mannose-1-phosphate guanylyltransferase catalytic subunit beta (365 aa).

The interval 2 to 221 (KALILVGGYG…PGFWMDVGQP (220 aa)) is substrate-binding domain. Asp-109 lines the GDP-alpha-D-mannose pocket. Asp-109 lines the Mg(2+) pocket. The active site involves Lys-161. Residue Asp-217 participates in GDP-alpha-D-mannose binding. Asp-217 contributes to the Mg(2+) binding site. Residues 244–365 (ETGSNIHPTA…VNVPSKDIIM (122 aa)) form a hexapeptide repeat domain region.

Belongs to the transferase hexapeptide repeat family. Component of the GMPPA-GMPPB mannose-1-phosphate guanylyltransferase complex composed of 4 GMPPA subunits and 8 tag-335/GMPPB subunits; the complex is organized into three layers, a central layer made up of 2 GMPPA dimers sandwiched between two layers each made up of 2 tag-335/GMPPB dimers. Catalytic activity of tag-335/GMPPB is reduced when part of the complex and binding of GDP-alpha-D-Mannose by GMPPA induces allosteric feedback inhibition of tag-335/GMPPB. It depends on Mg(2+) as a cofactor.

The catalysed reaction is alpha-D-mannose 1-phosphate + GTP + H(+) = GDP-alpha-D-mannose + diphosphate. It functions in the pathway nucleotide-sugar biosynthesis; GDP-alpha-D-mannose biosynthesis; GDP-alpha-D-mannose from alpha-D-mannose 1-phosphate (GTP route): step 1/1. With respect to regulation, enzyme activity is reduced by incorporation into the GMPPA-GMPPB mannose-1-phosphate guanylyltransferase complex. Allosterically inhibited, when part of the GMPPA-GMPPB complex, by GDP-alpha-D-mannose binding to GMPPA. Functionally, catalytic subunit of the GMPPA-GMPPB mannose-1-phosphate guanylyltransferase complex. Catalyzes the formation of GDP-mannose, an essential precursor of glycan moieties of glycoproteins and glycolipids. Can catalyze the reverse reaction in vitro. Together with GMPPA regulates GDP-alpha-D-mannose levels. This is Mannose-1-phosphate guanylyltransferase catalytic subunit beta (tag-335) from Caenorhabditis elegans.